The chain runs to 215 residues: uncharacterized protein (215 aa).

Belongs to the thiaminase-2 family.

This is an uncharacterized protein from Haemophilus influenzae (strain ATCC 51907 / DSM 11121 / KW20 / Rd).